A 151-amino-acid polypeptide reads, in one-letter code: SsrA-binding protein (151 aa).

A disordered region spans residues lysine 132–isoleucine 151.

The protein belongs to the SmpB family.

The protein resides in the cytoplasm. Required for rescue of stalled ribosomes mediated by trans-translation. Binds to transfer-messenger RNA (tmRNA), required for stable association of tmRNA with ribosomes. tmRNA and SmpB together mimic tRNA shape, replacing the anticodon stem-loop with SmpB. tmRNA is encoded by the ssrA gene; the 2 termini fold to resemble tRNA(Ala) and it encodes a 'tag peptide', a short internal open reading frame. During trans-translation Ala-aminoacylated tmRNA acts like a tRNA, entering the A-site of stalled ribosomes, displacing the stalled mRNA. The ribosome then switches to translate the ORF on the tmRNA; the nascent peptide is terminated with the 'tag peptide' encoded by the tmRNA and targeted for degradation. The ribosome is freed to recommence translation, which seems to be the essential function of trans-translation. The protein is SsrA-binding protein of Lactobacillus johnsonii (strain CNCM I-12250 / La1 / NCC 533).